A 359-amino-acid polypeptide reads, in one-letter code: Probable dual-specificity RNA methyltransferase RlmN (359 aa).

Glu-91 (proton acceptor) is an active-site residue. A Radical SAM core domain is found at 97–329; sequence QHYGHSVCVT…KKNGVNCVVR (233 aa). A disulfide bridge links Cys-104 with Cys-340. [4Fe-4S] cluster contacts are provided by Cys-111, Cys-115, and Cys-118. S-adenosyl-L-methionine-binding positions include 163–164, Ser-195, 218–220, and Asn-296; these read GE and SLH. Catalysis depends on Cys-340, which acts as the S-methylcysteine intermediate.

Belongs to the radical SAM superfamily. RlmN family. It depends on [4Fe-4S] cluster as a cofactor.

The protein localises to the cytoplasm. It catalyses the reaction adenosine(2503) in 23S rRNA + 2 reduced [2Fe-2S]-[ferredoxin] + 2 S-adenosyl-L-methionine = 2-methyladenosine(2503) in 23S rRNA + 5'-deoxyadenosine + L-methionine + 2 oxidized [2Fe-2S]-[ferredoxin] + S-adenosyl-L-homocysteine. It carries out the reaction adenosine(37) in tRNA + 2 reduced [2Fe-2S]-[ferredoxin] + 2 S-adenosyl-L-methionine = 2-methyladenosine(37) in tRNA + 5'-deoxyadenosine + L-methionine + 2 oxidized [2Fe-2S]-[ferredoxin] + S-adenosyl-L-homocysteine. Its function is as follows. Specifically methylates position 2 of adenine 2503 in 23S rRNA and position 2 of adenine 37 in tRNAs. The protein is Probable dual-specificity RNA methyltransferase RlmN of Streptococcus pyogenes serotype M18 (strain MGAS8232).